Consider the following 120-residue polypeptide: Large ribosomal subunit protein uL24 (120 aa).

Belongs to the universal ribosomal protein uL24 family. In terms of assembly, part of the 50S ribosomal subunit.

In terms of biological role, one of two assembly initiator proteins, it binds directly to the 5'-end of the 23S rRNA, where it nucleates assembly of the 50S subunit. Located at the polypeptide exit tunnel on the outside of the subunit. This Archaeoglobus fulgidus (strain ATCC 49558 / DSM 4304 / JCM 9628 / NBRC 100126 / VC-16) protein is Large ribosomal subunit protein uL24.